Reading from the N-terminus, the 388-residue chain is Basigin (388 aa).

The signal sequence occupies residues 1–22 (MAAALLLALAFTFLSGQGACAA). Residues 23–326 (AGFLKAPMSQ…ISLRVRSRLA (304 aa)) are Extracellular-facing. Residues 37–120 (GGSVVLHCEA…SSDPDRNHLT (84 aa)) enclose the Ig-like domain. Cystine bridges form between C44/C108, C157/C203, and C242/C304. The region spanning 138–219 (EPGTIVTSVQ…VGRGNINVEG (82 aa)) is the Ig-like C2-type domain. N-linked (GlcNAc...) asparagine glycosylation is found at N160, N269, and N305. Residues 221-320 (PRIKVGKKSE…GSARETISLR (100 aa)) form the Ig-like V-type domain. A helical membrane pass occupies residues 327 to 347 (ALWPFLGIVAEVLVLVTIIFI). At 348 to 388 (YEKRRKPDQTLDEDDPGAAPLKGSGSHLNDKDKNVRQRNAT) the chain is on the cytoplasmic side. Residues 355 to 388 (DQTLDEDDPGAAPLKGSGSHLNDKDKNVRQRNAT) form a disordered region. T357 bears the Phosphothreonine mark. S371 is modified (phosphoserine).

Homooligomer. Interacts with NXNL1, SLC2A1 and SLC16A1/GLUT1. Interacts with XKR8; promoting its localization at the cell membrane. In terms of assembly, homooligomer. Interacts with SLC16A1; interaction mediates SLC16A1 targeting to the plasma membrane. Interacts with SLC16A3; interaction mediates SLC16A3 targeting to the plasma membrane. Interacts with VEGFA, KDR/VEGFR2, PPIA/CYPA, SLC16A12, SLC16A11, ATP1B2, MAG, L1CAM and AJAP1. Interacts with PPIL2; regulates BSG transport to the cell membrane. As to quaternary structure, interacts with SLC16A6; this interaction mediates targeting to the plasma membrane. In terms of tissue distribution, expressed in the skeletal muscle, liver, small intestine, kidney, testis, brain, heart and spleen. Also present in various immature cells and endothelia.

It is found in the cell membrane. It localises to the photoreceptor inner segment. The protein resides in the cell projection. The protein localises to the cilium. Its subcellular location is the photoreceptor outer segment. It is found in the endoplasmic reticulum membrane. It localises to the basolateral cell membrane. In terms of biological role, essential for normal retinal maturation and development. Acts as a retinal cell surface receptor for NXNL1 and plays an important role in NXNL1-mediated survival of retinal cone photoreceptors. In association with glucose transporter SLC16A1/GLUT1 and NXNL1, promotes retinal cone survival by enhancing aerobic glycolysis and accelerating the entry of glucose into photoreceptors. Its function is as follows. Signaling receptor for cyclophilins, essential for PPIA/CYPA and PPIB/CYPB-dependent signaling related to chemotaxis and adhesion of immune cells. Plays an important role in targeting the monocarboxylate transporters SLC16A1/GLUT1 and SLC16A3 to the plasma membrane. Acts as a coreceptor for vascular endothelial growth factor receptor 2 (KDR/VEGFR2) in endothelial cells enhancing its VEGFA-mediated activation and downstream signaling. Promotes angiogenesis through EPAS1/HIF2A-mediated up-regulation of VEGFA and KDR/VEGFR2 in endothelial cells. Plays an important role in spermatogenesis; mediates interactions between germ cells and Sertoli cell and is essential for the development/differentiation of germ cells to round spermatids. This is Basigin (Bsg) from Rattus norvegicus (Rat).